Consider the following 519-residue polypeptide: Circadian clock oscillator protein KaiC (519 aa).

The region spanning methionine 1 to phenylalanine 247 is the KaiC 1 domain. ATP contacts are provided by glycine 49, threonine 50, glycine 51, lysine 52, threonine 53, and leucine 54. Threonine 53 provides a ligand contact to Mg(2+). Glutamate 77 (proton acceptor in CI (KaiC 1)) is an active-site residue. Serine 89 provides a ligand contact to ATP. The interval glutamine 115–aspartate 122 is B-loop, required to bind KaiB and SasA. ATP contacts are provided by lysine 224, leucine 225, arginine 226, threonine 228, histidine 230, threonine 240, and aspartate 241. Residues proline 248–asparagine 260 are linker. Residues valine 261 to serine 519 form the KaiC 2 domain. ATP-binding residues include threonine 290, glycine 291, threonine 292, glycine 293, lysine 294, threonine 295, and leucine 296. Mg(2+) is bound at residue threonine 295. Glutamate 318 provides a ligand contact to Mg(2+). Glutamate 318 acts as the Proton acceptor in CII (KaiC 2) in catalysis. Position 331 (tryptophan 331) interacts with ATP. Serine 431 carries the post-translational modification Phosphoserine; by autocatalysis. Threonine 432 carries the post-translational modification Phosphothreonine; by autocatalysis. The ATP site is built by arginine 451, lysine 457, methionine 458, arginine 459, serine 461, histidine 463, and lysine 465. The tract at residues arginine 488–isoleucine 497 is A-loop, interacts with KaiA.

Belongs to the KaiC family. In terms of assembly, homohexamer resembling 2 stacked donuts with a central pore nearly blocked on one side; hexamerization is dependent on ATP-binding. Binds 12 ATP; 6 between each subunit in both layers. KaiB only binds to phospho-Ser-431 KaiC (not doubly phosphorylated KaiC). Complex formation between KaiB and KaiC is regulated by the phosphorylation state of KaiC and by an ATP hydrolysis-driven conformation change in the CI ring of KaiC; complex formation is slow. Slow complex formation is crucial for the timing of the circadian period. KaiB switches to a thioredoxin-like form called KaiB(fs) when bound to KaiC. The KaiABC complex composition changes during the circadian cycle to control KaiC phosphorylation. Complexes KaiC(6), KaiA(2-4):KaiC(6), KaiB(6):KaiC(6) and KaiC(6):KaiB(6):KaiA(12) are among the most important forms, many form cooperatively. Interacts directly with KaiB and SasA. The CI domain binds to KaiB and SasA; as they have a similar fold they compete for the same site on CI. CikA interacts with this protein in the clock complex. Binds to the C-terminus of KaiA via a coiled-coil structure. Forms KaiC(6):KaiB(1) and KaiC(6):KaiB(6) complexes. It depends on Mg(2+) as a cofactor. Post-translationally, has a 4 step phosphorylation cycle; the autokinase acts first on Thr-432, then Ser-431. When Ser-431 is modified KaiC switches to an autophosphatase mode, acting first on phospho-Thr-432 then phospho-Ser-431. Phosphorylated and dephosphorylated on serine/threonine residues by autocatalysis. Unphosphorylated, mono- and di-phosphorylated forms exist. The phosphorylated form correlates with clock speed. The presence of KaiA increases phosphorylation and stabilizes these forms. In terms of processing, phosphorylated on serine and threonine residues by autocatalysis. Has a 4 step phosphorylation cycle; the autokinase acts first on Thr-432, then Ser-431. When Ser-431 is modified KaiC switches to an autophosphatase mode, acting first on phospho-Thr-432 then phospho-Ser-431.

It catalyses the reaction L-seryl-[protein] + ATP = O-phospho-L-seryl-[protein] + ADP + H(+). The enzyme catalyses L-threonyl-[protein] + ATP = O-phospho-L-threonyl-[protein] + ADP + H(+). The catalysed reaction is ATP + H2O = ADP + phosphate + H(+). Interaction with KaiA stimulates autophosphorylation, KaiC interaction with KaiB sequesters KaiA, preventing it stimulating the KaiC kinase, leading to autodephosphorylation. A KaiA dimer is sufficient to enhance KaiC phosphorylation. Interaction of KaiA with the A-loop stimulates autokinase activity. The KaiABC oscillator complex constitutes the main circadian regulator in cyanobacteria. Complex composition changes during the circadian cycle to control KaiC phosphorylation; KaiA stimulates KaiC autophosphorylation, while KaiB sequesters KaiA, leading to KaiC autodephosphorylation. The Kai complex controls chromosome condensation, leading to a transcription accessible chromosome during the first half of the circadian cycle and a compact, less transcription-accessible chromosome during the latter half. Clock output pathways impact the RpaA transcriptional regulator. Circadian oscillations can be generated in vitro by incubating KaiA, KaiB and KaiC with 1 mM ATP. The cycle is self-sustainable for at least 3 cycles and resistant to temperature changes. Mutations in KaiC alone prolong or reduce the circadian rhythm. A very robust clock is reconstituted with KaiA, KaiB, KaiC, SasA, CikA and RpaA; output is measured by transcription from an appropriate reporter. In terms of biological role, the level of KaiC phosphorylation and KaiC ATPase activity represent the key features of the biochemical oscillator. KaiA homodimer binding to the KaiC CII domain stimulates KaiC's ATPase activity and forms KaiA(2-4):KaiC(6) complexes, which stimulate KaiC autophosphorylation first on Thr-432 then Ser-431. Phospho-Ser-431-KaiC accumulation triggers binding of KaiB to CI to form the KaiB(6):KaiC(6) complex, leading to changes in the output regulators CikA and SasA. KaiB(6):KaiC(6) formation exposes a site for KaiA binding that sequesters KaiA from the CII domain, making the KaiC(6):KaiB(6):KaiA(12) complex that results in KaiC autodephosphorylation. Complete dephosphorylation of KaiC leads to dissociation of KaiA(2):KaiB(1), completing 1 cycle of the Kai oscillator. Its function is as follows. Has a weak, temperature-independent ATPase activity (about 15 molecules of ATP per day); the addition of KaiA and KaiB increases activity slightly and makes the activity oscillate with a circadian period in vitro for over 60 hours. ATPase activity defines the circadian period. The phosphorylation state of KaiC modulates its ATPase activity and effects KaiB binding. Functionally, there are several clock output pathways; SasA/RpaA, CikA/RpaA and LabA. KaiC enhances the autophosphorylation activity of SasA, which then transfers its phosphate group to RpaA to activate it. Phosphotransfer is maximal when KaiC phosphorylation is active during the circadian cycle. KaiB and KaiC together enhance the phosphatase activity of CikA on phospho-RpaA. KaiC is important for metabolic partitioning during the dark to light shift, modulating the balance between the Calvin cycle and oxidative pentose phosphate pathway under natural growth conditions. In Synechococcus elongatus (strain ATCC 33912 / PCC 7942 / FACHB-805) (Anacystis nidulans R2), this protein is Circadian clock oscillator protein KaiC.